The primary structure comprises 275 residues: Alpha carbonic anhydrase 7 (275 aa).

Residues 1–27 (MVNYSSISCIFFVALFSIFTIVSISSA) form the signal peptide. N-linked (GlcNAc...) asparagine glycans are attached at residues Asn3 and Asn96. The Alpha-carbonic anhydrase domain occupies 38 to 272 (REFNYKKNDE…TNKRIVHLYR (235 aa)). An intrachain disulfide couples Cys63 to Cys222. The active-site Proton acceptor is His104. Zn(2+)-binding residues include His130, His132, and His149. 218–219 (TT) is a substrate binding site. N-linked (GlcNAc...) asparagine glycosylation occurs at Asn225.

The protein belongs to the alpha-class carbonic anhydrase family. The cofactor is Zn(2+). In terms of processing, N-glycosylated.

It localises to the plastid. Its subcellular location is the chloroplast stroma. The catalysed reaction is hydrogencarbonate + H(+) = CO2 + H2O. Functionally, reversible hydration of carbon dioxide. This chain is Alpha carbonic anhydrase 7 (ACA7), found in Arabidopsis thaliana (Mouse-ear cress).